The chain runs to 183 residues: TATA box-binding protein-like 1 (183 aa).

It belongs to the TBP family. As to quaternary structure, binds TFIIA and TFIIB. Present in the brain, heart, liver and gizzard.

Its subcellular location is the cytoplasm. It is found in the nucleus. Its function is as follows. Part of a specialized transcription system that mediates the transcription of most ribosomal proteins through the 5'-TCT-3' motif which is a core promoter element at these genes. Seems to also mediate the transcription of NF1. Does not bind the TATA box. The sequence is that of TATA box-binding protein-like 1 (TBPL1) from Gallus gallus (Chicken).